We begin with the raw amino-acid sequence, 533 residues long: Probable ADP-ribosylation factor-binding protein C25H2.16c (533 aa).

The 137-residue stretch at 15–151 (ATEPYAFEPD…LLSYKGYTFP (137 aa)) folds into the VHS domain. The GAT domain maps to 178-305 (REAMSAKLQE…LLTQYDHLLE (128 aa)). S320 carries the phosphoserine modification. In terms of domain architecture, GAE spans 417–532 (NNFTSTCAFE…EYTGQSSIRL (116 aa)).

This sequence belongs to the GGA protein family.

The protein resides in the golgi apparatus. The protein localises to the trans-Golgi network. Its function is as follows. May play a role in the regulation of membrane traffic through the trans-Golgi network. The sequence is that of Probable ADP-ribosylation factor-binding protein C25H2.16c from Schizosaccharomyces pombe (strain 972 / ATCC 24843) (Fission yeast).